The primary structure comprises 202 residues: Cutinase (202 aa).

The signal sequence occupies residues 1 to 20 (MKTSAQQLLSALLLPLSVLA). A disulfide bridge links Cys31 with Cys106. Residue Ser117 is the Nucleophile of the active site. Cys165 and Cys172 are disulfide-bonded. Asp169 is a catalytic residue. His182 (proton donor/acceptor) is an active-site residue.

This sequence belongs to the cutinase family. In terms of processing, the 2 disulfide bonds play a critical role in holding the catalytic residues in juxta-position; reduction of the disulfide bridges results in the complete inactivation of the enzyme.

The protein localises to the secreted. The catalysed reaction is cutin + H2O = cutin monomers.. Its function is as follows. Catalyzes the hydrolysis of complex carboxylic polyesters found in the cell wall of plants. Degrades cutin, a macromolecule that forms the structure of the plant cuticle. Allows pathogenic fungi to penetrate through the cuticular barrier into the host plant during the initial stage of fungal infection. The chain is Cutinase from Botryotinia fuckeliana (Noble rot fungus).